The sequence spans 399 residues: Elongation factor Tu (399 aa).

One can recognise a tr-type G domain in the interval 10-204 (KPHVNIGTIG…AVDASIPEPE (195 aa)). Residues 19–26 (GHVDHGKT) form a G1 region. Residue 19–26 (GHVDHGKT) coordinates GTP. Residue threonine 26 participates in Mg(2+) binding. A G2 region spans residues 60 to 64 (GITIN). Positions 81-84 (DCPG) are G3. Residues 81–85 (DCPGH) and 136–139 (NKCD) each bind GTP. The segment at 136-139 (NKCD) is G4. The tract at residues 174 to 176 (SGL) is G5.

This sequence belongs to the TRAFAC class translation factor GTPase superfamily. Classic translation factor GTPase family. EF-Tu/EF-1A subfamily. Monomer.

Its subcellular location is the cytoplasm. The enzyme catalyses GTP + H2O = GDP + phosphate + H(+). GTP hydrolase that promotes the GTP-dependent binding of aminoacyl-tRNA to the A-site of ribosomes during protein biosynthesis. The sequence is that of Elongation factor Tu from Prochlorococcus marinus subsp. pastoris (strain CCMP1986 / NIES-2087 / MED4).